The primary structure comprises 465 residues: FAD-dependent oxidoreductase pigF (465 aa).

The first 17 residues, 1–17, serve as a signal peptide directing secretion; sequence MMLLTLLILSSVGLAAA. N-linked (GlcNAc...) asparagine glycosylation is found at Asn-95, Asn-138, Asn-260, and Asn-327. Asp-444 carries the GPI-anchor amidated aspartate lipid modification. Positions 445 to 465 are cleaved as a propeptide — removed in mature form; that stretch reads SASGIWNLTNAVVLPGLLTGL. An N-linked (GlcNAc...) asparagine glycan is attached at Asn-451.

It belongs to the beta-cyclopiazonate dehydrogenase family. FAD is required as a cofactor.

The protein resides in the cell membrane. It functions in the pathway secondary metabolite biosynthesis. FAD-dependent oxidoreductase; part of the gene cluster that mediates the biosynthesis of azaphilone pigments (MonAzPs), a complex mixture of compounds with a common azaphilone skeleton very widely used as food colorants. Within the pathway, pigF desaturates C6(7) to afford the orange and red pigments from yellow pigments. The first step of the pathway is performed by the nrPKS pigA that forms the hexaketide precursor from successive condensations of five malonyl-CoA units, with a simple acetyl-CoA starter unit. The role of esterase pigG is not clear, but it may play at most a supplementary role in the formation of the benzaldehyde produced by the pigA nrPKS. This very reactive benzaldehyde is intercepted by the pigC ketoreductase that to provide the first stable enzyme-free MonAzPs intermediate, 6-(4-hydroxy-2-oxopentyl)-3-methyl-2,4-dioxocyclohexane carbaldehyde, also known as M7PKS-1. The FAD-dependent monooxygenase pigN hydroxylates M7PKS-1 at C-4, which triggers the formation of the pyran ring. PigJ, pigK and pigD are involved in the acetylation of the pyran ring. PigJ and pigK form the two subunits of a dedicated fungal FAS that produces the side chain fatty acyl moiety of MonAzPs and pigD transfers the fatty acyl chain to the C-4 alcohol. PigM and pigO are involved in the elimination of the omega-1 alcohol. PigM acts as an O-acetyltransferase that synthesizes the putative O-11 acetyl intermediate whereas pigO eliminates acetic acid to yield an intermediate with a C10(11) double bond. The dehydration of the C-11 alcohol followed by the reduction of the C6(7) double bond by the NAD(P)H-dependent oxidoreductase pigE increases the electrophilicity of the C-5 ketone of the resulting acyl benzopyran. This in turn sets up the C-5 ketone for an intramolecular Knoevenagel aldol condensation with the C-20 enol of the side chain. This condensation affords the characteristic linear tricyclic carbon skeletons of the yellow pigments that serve as the common precursors for the classical yellow pigments monascin and ankaflavin, orange pigments rubopunctatin and monascorubrin, and red pigments ribropunctamine and monascorubramine. The FAD-dependent oxidoreductase pigF is especially invoved in the biosynthesis of orange and red pigments via desaturation of C6(7). This chain is FAD-dependent oxidoreductase pigF, found in Monascus ruber (Mold).